Consider the following 796-residue polypeptide: Conidiophore development regulator abaA (796 aa).

A DNA-binding region (TEA) is located at residues 133–207 (GKDGEPVWSD…QVLDSFLKGD (75 aa)). Residues 215 to 254 (REQSDRSTAQTQPVGPRWRTSMDHLPSSHYGTHATSSYPE) form a disordered region. Residues 243–252 (HYGTHATSSY) show a composition bias toward polar residues. Residues 341-362 (LSDVNDPLNCEIILLETNLELM) form a leucine-zipper-like region. Residues 612 to 643 (EGLSDKTAPTSVLDPFPNLTQQTTSQTAGINV) form a disordered region. Positions 629-643 (NLTQQTTSQTAGINV) are enriched in polar residues.

It belongs to the TEC1 family.

Its subcellular location is the nucleus. Its function is as follows. BrlA, abaA and wetA are pivotal regulators of conidiophore development and conidium maturation. They act individually and together to regulate their own expression and that of numerous other sporulation-specific gene. Controls temporal and spatial specificity in Aspergillus development. Directs the differentiation of phialides and is continuously required for maintenance of their function. Expression of abaA leads to activation of brlA and wetA, cessation of vegetative growth, and accentuated cellular vacuolization. Binds to the sequence 5'-CATTCY-3', where Y is a pyrimidine, making both major- and minor-groove contacts. Multiple abaA binding sites are present in the cis-acting regulatory regions of several developmentally controlled structural genes as well as those of the upstream regulatory gene brlA, the downstream regulatory gene wetA, and abaA itself. The sequence is that of Conidiophore development regulator abaA from Emericella nidulans (strain FGSC A4 / ATCC 38163 / CBS 112.46 / NRRL 194 / M139) (Aspergillus nidulans).